We begin with the raw amino-acid sequence, 270 residues long: Phosphate import ATP-binding protein PstB 1 (270 aa).

Positions 24-265 (LAVERLNLFY…PYQRQTEDYI (242 aa)) constitute an ABC transporter domain. ATP is bound at residue 56-63 (GPSGCGKS).

The protein belongs to the ABC transporter superfamily. Phosphate importer (TC 3.A.1.7) family. In terms of assembly, the complex is composed of two ATP-binding proteins (PstB), two transmembrane proteins (PstC and PstA) and a solute-binding protein (PstS).

The protein localises to the cell inner membrane. The enzyme catalyses phosphate(out) + ATP + H2O = ADP + 2 phosphate(in) + H(+). In terms of biological role, part of the ABC transporter complex PstSACB involved in phosphate import. Responsible for energy coupling to the transport system. This chain is Phosphate import ATP-binding protein PstB 1, found in Yersinia pestis bv. Antiqua (strain Antiqua).